The chain runs to 155 residues: 3-dehydroquinate dehydratase (155 aa).

Tyr-32 functions as the Proton acceptor in the catalytic mechanism. Positions 84, 90, and 97 each coordinate substrate. His-110 acts as the Proton donor in catalysis. Substrate contacts are provided by residues Leu-111–Ser-112 and Arg-121.

This sequence belongs to the type-II 3-dehydroquinase family. Homododecamer.

It catalyses the reaction 3-dehydroquinate = 3-dehydroshikimate + H2O. It participates in metabolic intermediate biosynthesis; chorismate biosynthesis; chorismate from D-erythrose 4-phosphate and phosphoenolpyruvate: step 3/7. Functionally, catalyzes a trans-dehydration via an enolate intermediate. The chain is 3-dehydroquinate dehydratase from Ralstonia pickettii (strain 12J).